The sequence spans 122 residues: Succinate dehydrogenase assembly factor 2, mitochondrial (122 aa).

The protein belongs to the SDHAF2 family. Interacts with the flavoprotein subunit within the SDH catalytic dimer.

The protein resides in the mitochondrion matrix. In terms of biological role, plays an essential role in the assembly of succinate dehydrogenase (SDH), an enzyme complex (also referred to as respiratory complex II) that is a component of both the tricarboxylic acid (TCA) cycle and the mitochondrial electron transport chain, and which couples the oxidation of succinate to fumarate with the reduction of ubiquinone (coenzyme Q) to ubiquinol. Required for flavinylation (covalent attachment of FAD) of the flavoprotein subunit of the SDH catalytic dimer. This is Succinate dehydrogenase assembly factor 2, mitochondrial from Caenorhabditis briggsae.